A 689-amino-acid chain; its full sequence is Protein CFAP20DC (689 aa).

Disordered stretches follow at residues 241-263 (LKSTSRERTETPSGSSSGNNRIE), 333-423 (SKES…GPSE), and 584-659 (ISTS…DLSV). Composition is skewed to polar residues over residues 251-260 (TPSGSSSGNN) and 343-359 (EESQSVPKDIFTFSSRP). The segment covering 394-405 (SEDDFYGGDSSE) has biased composition (acidic residues). Residues 409–421 (HSIQGSRGPTTGP) are compositionally biased toward polar residues. Low complexity predominate over residues 584-593 (ISTSSDDTTT).

This Homo sapiens (Human) protein is Protein CFAP20DC.